Reading from the N-terminus, the 434-residue chain is Nicotinate phosphoribosyltransferase (434 aa).

Residue H242 is modified to Phosphohistidine; by autocatalysis.

Belongs to the NAPRTase family. In terms of processing, transiently phosphorylated on a His residue during the reaction cycle. Phosphorylation strongly increases the affinity for substrates and increases the rate of nicotinate D-ribonucleotide production. Dephosphorylation regenerates the low-affinity form of the enzyme, leading to product release.

It catalyses the reaction nicotinate + 5-phospho-alpha-D-ribose 1-diphosphate + ATP + H2O = nicotinate beta-D-ribonucleotide + ADP + phosphate + diphosphate. The protein operates within cofactor biosynthesis; NAD(+) biosynthesis; nicotinate D-ribonucleotide from nicotinate: step 1/1. Catalyzes the synthesis of beta-nicotinate D-ribonucleotide from nicotinate and 5-phospho-D-ribose 1-phosphate at the expense of ATP. The polypeptide is Nicotinate phosphoribosyltransferase (Brucella anthropi (strain ATCC 49188 / DSM 6882 / CCUG 24695 / JCM 21032 / LMG 3331 / NBRC 15819 / NCTC 12168 / Alc 37) (Ochrobactrum anthropi)).